An 804-amino-acid chain; its full sequence is MYNHKVVEKKWQDYWAKHDTFKTGTDSNKKNYYALDMFPFPSGKGLHVGHPEGYTATDIVSRMKRAQGYNVLHPMGWDAFGLPTEQYALKTGEDPEVVTKNNIANFKRQLNKLGFSYDWDREVTTSDPNYYKWTQWVFEQMYKKGLAYEAEVPVNWSPDLGTVVANEEIVDGKTERGGYPVYRRNMRQWMLKMTAYADRLLEDLDDLDWPEPVKEMQRNWIGRSLGAQVTFKIKDSDKTFDIFTTRPDTLFGCSYTVLAPENKLVQEITTDAQRDEVNAYIKKIESKSDLERTDLNKDKTGVFTGAYAINPVNGKEVPIWISDYVLASYGTGAVMAVPAHDERDYAFATKFGLPINPVLEGGDITKEAFTEDGPHINSEFLNGLNIKDAKKKMVEWLEEHNCGEKKVNYKLRDWDFSRQRYWGEPIPVIHWEDGETTLVPEDQLPLRLPHATDIKPSGTPESPLANLTDWVNVVDENGRKGKRETNTMPNWAGSSWYYLRYVDPHNDKELADYDLLKKWLPVDLYIGGAEHAVRHLLYARFWHKVLYDLGVVPTKEPFQRLYNQGLILKNHEKMSKSKGNVVNPDDVIDEYGADSLRMYEMFMGPLDASIDWDDNGPASTKKFLDRVWRLFVNDLDLKAIPQERIVDENDGELDKVYAETVKKVTEDFDALHFNTAISQMMVFMNAAQKAKTIPREYAEGFVKLLAPVAPHMMEEIWQVFGHDESISYAEWSTYDPAKLVESTVEIMVQVNGKLRGKFQAAKDADRDEVQKQAMELPHVQKFLEGKDVKKVIVVPNKIVNIVAK.

The short motif at 39–50 (PFPSGKGLHVGH) is the 'HIGH' region element. The short motif at 573 to 577 (KMSKS) is the 'KMSKS' region element. An ATP-binding site is contributed by lysine 576.

It belongs to the class-I aminoacyl-tRNA synthetase family.

Its subcellular location is the cytoplasm. It catalyses the reaction tRNA(Leu) + L-leucine + ATP = L-leucyl-tRNA(Leu) + AMP + diphosphate. In Lactobacillus acidophilus (strain ATCC 700396 / NCK56 / N2 / NCFM), this protein is Leucine--tRNA ligase.